A 1009-amino-acid polypeptide reads, in one-letter code: Rho-type GTPase-activating protein 2 (1009 aa).

2 LIM zinc-binding domains span residues 11-68 (SLCV…DCSD) and 69-129 (KCTN…LLRK). Residues 143 to 155 (KEDFPIKLPERSV) show a composition bias toward basic and acidic residues. 5 disordered regions span residues 143 to 228 (KEDF…RTVS), 358 to 433 (TKEN…LSRS), 449 to 608 (TSEM…DATD), 664 to 709 (TREK…ASPK), and 723 to 780 (QVGD…DYTP). Residues 162 to 196 (TRINGKSDVSTNNTAISKNLVSSNEDQQLTPQVLV) are compositionally biased toward polar residues. A compositionally biased stretch (basic and acidic residues) spans 212–222 (DNSKDREETSS). Composition is skewed to polar residues over residues 363–385 (KSSQ…ITRT) and 399–414 (LRLS…QTAD). Positions 481 to 491 (NIRKSKAKKNP) are enriched in basic residues. Composition is skewed to polar residues over residues 493–510 (SRGQ…QHGN) and 522–553 (QSSL…SSSG). Positions 664-682 (TREKDKQSASSRESLEQKE) are enriched in basic and acidic residues. Composition is skewed to polar residues over residues 683–707 (NIAT…SNAS) and 728–749 (ESQQ…QKEI). Serine 763 bears the Phosphoserine mark. Residues 788-1006 (SSLQARCAYE…FILGNYRDIF (219 aa)) enclose the Rho-GAP domain.

Functionally, GTPase-activating protein (GAP) for CDC42 and/or RHO1. This is Rho-type GTPase-activating protein 2 (RGA2) from Saccharomyces cerevisiae (strain ATCC 204508 / S288c) (Baker's yeast).